Consider the following 426-residue polypeptide: Serine/threonine-protein kinase ssn3 (426 aa).

A Protein kinase domain is found at 41–368; it reads YHIVGFISSG…AQEALEHPYF (328 aa). ATP-binding positions include 47–55 and Lys71; that span reads ISSGTYGRV. Asp173 serves as the catalytic Proton acceptor. The segment at 390–426 is disordered; sequence RVTQDDNDIRSGSLPGTKRSGLPDDSLMGRAAKRLKE.

Belongs to the protein kinase superfamily. CMGC Ser/Thr protein kinase family. CDC2/CDKX subfamily. Component of the srb8-11 complex, a regulatory module of the Mediator complex. Mg(2+) serves as cofactor.

Its subcellular location is the nucleus. The catalysed reaction is L-seryl-[protein] + ATP = O-phospho-L-seryl-[protein] + ADP + H(+). It carries out the reaction L-threonyl-[protein] + ATP = O-phospho-L-threonyl-[protein] + ADP + H(+). The enzyme catalyses [DNA-directed RNA polymerase] + ATP = phospho-[DNA-directed RNA polymerase] + ADP + H(+). Functionally, component of the srb8-11 complex. The srb8-11 complex is a regulatory module of the Mediator complex which is itself involved in regulation of basal and activated RNA polymerase II-dependent transcription. The srb8-11 complex may be involved in the transcriptional repression of a subset of genes regulated by Mediator. It may inhibit the association of the Mediator complex with RNA polymerase II to form the holoenzyme complex. The srb8-11 complex phosphorylates the C-terminal domain (CTD) of the largest subunit of RNA polymerase II. The sequence is that of Serine/threonine-protein kinase ssn3 (ssn3) from Aspergillus clavatus (strain ATCC 1007 / CBS 513.65 / DSM 816 / NCTC 3887 / NRRL 1 / QM 1276 / 107).